A 447-amino-acid polypeptide reads, in one-letter code: Elongation factor 1-alpha (447 aa).

One can recognise a tr-type G domain in the interval lysine 5–serine 230. The segment at glycine 14–serine 21 is G1. Glycine 14–serine 21 contacts GTP. Lysine 55 carries the N6,N6-dimethyllysine modification. The tract at residues glycine 70–aspartate 74 is G2. The residue at position 79 (lysine 79) is an N6,N6,N6-trimethyllysine. A G3 region spans residues aspartate 91–glycine 94. GTP contacts are provided by residues aspartate 91–histidine 95 and asparagine 153–aspartate 156. The interval asparagine 153 to aspartate 156 is G4. Position 187 is an N6,N6,N6-trimethyllysine (lysine 187). The interval serine 194 to phenylalanine 196 is G5. Lysine 261 carries the post-translational modification N6-methyllysine. Glutamate 289 is modified (5-glutamyl glycerylphosphorylethanolamine). Lysine 306 is modified (N6,N6,N6-trimethyllysine). Glutamate 362 carries the post-translational modification 5-glutamyl glycerylphosphorylethanolamine. The residue at position 396 (lysine 396) is an N6,N6,N6-trimethyllysine.

This sequence belongs to the TRAFAC class translation factor GTPase superfamily. Classic translation factor GTPase family. EF-Tu/EF-1A subfamily.

The protein resides in the cytoplasm. This protein promotes the GTP-dependent binding of aminoacyl-tRNA to the A-site of ribosomes during protein biosynthesis. In Oryza sativa subsp. japonica (Rice), this protein is Elongation factor 1-alpha (REFA1).